The sequence spans 425 residues: Gamma-glutamyl phosphate reductase (425 aa).

The protein belongs to the gamma-glutamyl phosphate reductase family.

Its subcellular location is the cytoplasm. It catalyses the reaction L-glutamate 5-semialdehyde + phosphate + NADP(+) = L-glutamyl 5-phosphate + NADPH + H(+). It participates in amino-acid biosynthesis; L-proline biosynthesis; L-glutamate 5-semialdehyde from L-glutamate: step 2/2. Catalyzes the NADPH-dependent reduction of L-glutamate 5-phosphate into L-glutamate 5-semialdehyde and phosphate. The product spontaneously undergoes cyclization to form 1-pyrroline-5-carboxylate. This chain is Gamma-glutamyl phosphate reductase, found in Symbiobacterium thermophilum (strain DSM 24528 / JCM 14929 / IAM 14863 / T).